We begin with the raw amino-acid sequence, 245 residues long: Protein-L-isoaspartate O-methyltransferase 1 (245 aa).

Residue S76 is part of the active site.

It belongs to the methyltransferase superfamily. L-isoaspartyl/D-aspartyl protein methyltransferase family.

It localises to the cytoplasm. It carries out the reaction [protein]-L-isoaspartate + S-adenosyl-L-methionine = [protein]-L-isoaspartate alpha-methyl ester + S-adenosyl-L-homocysteine. Functionally, catalyzes the methyl esterification of L-isoaspartyl residues in peptides and proteins that result from spontaneous decomposition of normal L-aspartyl and L-asparaginyl residues. It plays a role in the repair and/or degradation of damaged proteins. This chain is Protein-L-isoaspartate O-methyltransferase 1, found in Rhodopseudomonas palustris (strain HaA2).